The primary structure comprises 350 residues: MLEQLQTLKNEAETQINEASDLKSLNDLRVKYLGKKGPMTEIMKQMGKLSAEERPKMGSLANEVRTALTEAISSKQQILETEAINEKLKSETIDVTLPGTAPSIGTKHLLTQVIEEMEDMFIGMGYEIAEGPEVELDYYNFEALNLPKDHPARDMQDSFYITENTLLRTQTSPVQARTMEKHDFSKGPIKVICPGKVYRRDNDDATHSHQFTQIEGLVVGENITFADLKGTLTVLAKTMFGEEREIRLRPSFFPFTEPSVEMDISCFKCGGKGCRVCKGTGWIEILGSGMVHPNVLEMSGIDSTRYSGFAFGLGPERVAMLKYAVDDIRHLYTNDLRFTKQFQSTETGEI.

Residue Glu-257 coordinates Mg(2+).

Belongs to the class-II aminoacyl-tRNA synthetase family. Phe-tRNA synthetase alpha subunit type 1 subfamily. In terms of assembly, tetramer of two alpha and two beta subunits. Mg(2+) serves as cofactor.

It is found in the cytoplasm. The catalysed reaction is tRNA(Phe) + L-phenylalanine + ATP = L-phenylalanyl-tRNA(Phe) + AMP + diphosphate + H(+). This Listeria monocytogenes serotype 4a (strain HCC23) protein is Phenylalanine--tRNA ligase alpha subunit.